Consider the following 210-residue polypeptide: MARVLVLLSVVLVSLLVNQGRASDNQRLFNNAVIRVQHLHQLAAKMINDFEDSLLPEERRQLSKIFPLSFCNSDYIEAPAGKDETQKSSMLKLLRISFHLIESWEFPSQSLSGTVSNSLTVGNPNQLTEKLADLKMGISVLIQACLDGQPNMDDNDSLPLPFEDFYLTMGENNLRESFRLLACFKKDMHKVETYLRVANCRRSLDSNCTL.

Positions 1 to 23 (MARVLVLLSVVLVSLLVNQGRAS) are cleaved as a signal peptide. Histidine 38 provides a ligand contact to Zn(2+). Cysteines 71 and 183 form a disulfide. Zn(2+) is bound at residue glutamate 192. Residues cysteine 200 and cysteine 208 are joined by a disulfide bond.

It belongs to the somatotropin/prolactin family.

Its subcellular location is the secreted. Its function is as follows. Growth hormone plays an important role in growth control. This is Somatotropin (gh) from Cyprinus carpio (Common carp).